The chain runs to 164 residues: Nucleotide-binding protein Daro_3028 (164 aa).

This sequence belongs to the YajQ family.

Its function is as follows. Nucleotide-binding protein. This Dechloromonas aromatica (strain RCB) protein is Nucleotide-binding protein Daro_3028.